We begin with the raw amino-acid sequence, 247 residues long: Probable transcriptional regulatory protein SynWH7803_1972 (247 aa).

Belongs to the TACO1 family.

The protein resides in the cytoplasm. The chain is Probable transcriptional regulatory protein SynWH7803_1972 from Synechococcus sp. (strain WH7803).